Consider the following 154-residue polypeptide: Transcriptional repressor NrdR (154 aa).

The interval 1 to 22 (MRCPFCAHDDSQVKDSRPTDDG) is disordered. A zinc finger spans residues 3–34 (CPFCAHDDSQVKDSRPTDDGAAIRRRRQCEGC). Over residues 7-22 (AHDDSQVKDSRPTDDG) the composition is skewed to basic and acidic residues. The ATP-cone domain occupies 49–139 (MTVVKSDGRR…VYKDFREAKD (91 aa)).

It belongs to the NrdR family. The cofactor is Zn(2+).

Functionally, negatively regulates transcription of bacterial ribonucleotide reductase nrd genes and operons by binding to NrdR-boxes. This is Transcriptional repressor NrdR from Rhizorhabdus wittichii (strain DSM 6014 / CCUG 31198 / JCM 15750 / NBRC 105917 / EY 4224 / RW1) (Sphingomonas wittichii).